Here is a 650-residue protein sequence, read N- to C-terminus: Exonuclease 3'-5' domain-containing protein 2 (650 aa).

At 1 to 6 (MSRQNL) the chain is on the mitochondrial intermembrane side. The chain crosses the membrane as a helical span at residues 7–29 (VALTVTTLLGVAMGGFVLWKGIQ). Over 30 to 650 (RRWSKTSRVM…YGDDLPIKLS (621 aa)) the chain is Cytoplasmic. The segment at 34–89 (KTSRVMQQQPQQPQQPQQPQPQPQPQPQPQPEHPQPQQQVPGGREWPPPEDDQLPF) is disordered. Residues 49 to 67 (PQQPQPQPQPQPQPQPEHP) show a composition bias toward pro residues. Residues Asp137, Glu139, and Asp275 each coordinate a divalent metal cation. The 3'-5' exonuclease domain occupies 184 to 276 (ILADGAILKV…DQVTYAARDA (93 aa)). The disordered stretch occupies residues 340–373 (SQLKPRNRKAKTDRMVPGNNQGRDPRKHKRKPLG).

Belongs to the EXD2 family. Homodimer. Interacts with RBBP8, MRE11 and BRCA1. Requires Mg(2+) as cofactor. Mn(2+) is required as a cofactor.

The protein resides in the mitochondrion outer membrane. It is found in the mitochondrion matrix. The protein localises to the nucleus. It localises to the chromosome. It carries out the reaction Exonucleolytic cleavage in the 3'- to 5'-direction to yield nucleoside 5'-phosphates.. Functionally, exonuclease that has both 3'-5' exoribonuclease and exodeoxyribonuclease activities, depending on the divalent metal cation used as cofactor. In presence of Mg(2+), only shows 3'-5' exoribonuclease activity, while it shows both exoribonuclease and exodeoxyribonuclease activities in presence of Mn(2+). Acts as an exoribonuclease in mitochondrion, possibly by regulating ATP production and mitochondrial translation. Also involved in the response to DNA damage. Acts as 3'-5' exodeoxyribonuclease for double-strand breaks resection and efficient homologous recombination. Plays a key role in controlling the initial steps of chromosomal break repair, it is recruited to chromatin in a damage-dependent manner and functionally interacts with the MRN complex to accelerate resection through its 3'-5' exonuclease activity, which efficiently processes double-stranded DNA substrates containing nicks. Also involved in response to replicative stress: recruited to stalled forks and is required to stabilize and restart stalled replication forks by restraining excessive fork regression, thereby suppressing their degradation. This chain is Exonuclease 3'-5' domain-containing protein 2, found in Mus musculus (Mouse).